We begin with the raw amino-acid sequence, 546 residues long: Thermolysin (546 aa).

A signal peptide spans 1–25; that stretch reads MNKRAMLGAIGLAFGLMAWPFGASA. The propeptide at 26-228 is activation peptide; sequence KEKSMVWNEQ…EAKPGGGQPV (203 aa). Residues Asp287, Asp289, Gln291, and Asp368 each coordinate Ca(2+). His372 contributes to the Zn(2+) binding site. Residue Glu373 is part of the active site. Zn(2+)-binding residues include His376 and Glu396. Positions 407, 413, 415, 417, 420, 423, 424, 427, and 430 each coordinate Ca(2+). The active-site Proton donor is the His461.

Belongs to the peptidase M4 family. Requires Ca(2+) as cofactor. The cofactor is Zn(2+).

The protein localises to the secreted. It catalyses the reaction Preferential cleavage: Xaa-|-Leu &gt; Xaa-|-Phe.. Its function is as follows. Extracellular zinc metalloprotease. This is Thermolysin from Alicyclobacillus acidocaldarius subsp. acidocaldarius (Bacillus acidocaldarius).